Reading from the N-terminus, the 511-residue chain is MSDIKVTLAVEDRAENQDTLSISEIVPRIVAERKSFVDVTEESLLEEIANCVADSADDNVKDEVDEKPDESPFDQHRLKLLENVKAAYNESALALDFVSLLISSVRPTSASTSMSPHLKTHIPVGSLGADRVPAPQVANEPGVGIGWKIESLTNARDRLKTCASRLRTEAAKEKTYWAGVASIAATGEVLFKVRNSDTRGLGIKYGFGDAGSKYRDPGIGVLKRSATGTVDFEPKEEVQKKFVRVTIKSEEGEVTKSVSNVYTRDSKPPTDPTLAAIHETRHALFEEELFFEIAREARLLTSRKVTVADGAVTVDLGEGDMVVIEWVEVPEEPTTTFAPSLANLFVLALRLLLANAHRQQLEKMRTPPAPLQSKGGPNPNPPLPILRPLLAHILHKRLVSRARRSLYLLSTTHSGLSFEITTNNSTDKESSSLGRLMAAPVSNLKIKFSDKGNAKVVIPSPLQSHQSMFDVTMFKGTSQETVTSHTGFHELVELEEWVRWAADRSEPKKSN.

This sequence belongs to the Mediator complex subunit 17 family. In terms of assembly, component of the Mediator complex.

Its subcellular location is the nucleus. Component of the Mediator complex, a coactivator involved in the regulated transcription of nearly all RNA polymerase II-dependent genes. Mediator functions as a bridge to convey information from gene-specific regulatory proteins to the basal RNA polymerase II transcription machinery. Mediator is recruited to promoters by direct interactions with regulatory proteins and serves as a scaffold for the assembly of a functional preinitiation complex with RNA polymerase II and the general transcription factors. This chain is Mediator of RNA polymerase II transcription subunit 17 (SRB4), found in Yarrowia lipolytica (strain CLIB 122 / E 150) (Yeast).